Reading from the N-terminus, the 443-residue chain is MNRKYFGTDGIRGTVGEAPITPDFVLRLAHAVGRVLRRTEARPTVLIGKDTRISGYMLESALESGFNSAGVDVVLLGPLPTPGVAYLTRAQRASLGVVISASHNPFADNGIKFFSAQGNKLNDEWEFEVEATLKEEPVWADSASLGKTRRLDDAAGRYIEFCKSTFAHDLTLKGLKIVVDGAHGAAYQIAPMVFHELGAEVIAIGCAPDGLNINDGVGATHPQALVNAVLANKADYGIALDGDADRLQMVDAQGRLFNGDEVLYLMVNERLSRGEKVPGTVGTLMTNMAVEVALKAKGVEFVRAKVGDRYILEELERRGWLLGGEGSGHMLALDKHTTGDGLISALQVLQACARSNQTLAQLLSEVVLFPQTLINVRLKPGQDWKNSAELAAQTKAAEIELGDSGRILIRASGTEPLLRVMVEARDAEQARACAERVADAVRS.

S102 serves as the catalytic Phosphoserine intermediate. Positions 102, 241, 243, and 245 each coordinate Mg(2+). Phosphoserine is present on S102.

The protein belongs to the phosphohexose mutase family. The cofactor is Mg(2+). Activated by phosphorylation.

It catalyses the reaction alpha-D-glucosamine 1-phosphate = D-glucosamine 6-phosphate. In terms of biological role, catalyzes the conversion of glucosamine-6-phosphate to glucosamine-1-phosphate. The chain is Phosphoglucosamine mutase from Polaromonas naphthalenivorans (strain CJ2).